Consider the following 188-residue polypeptide: GMP synthase [glutamine-hydrolyzing] subunit A (188 aa).

The Glutamine amidotransferase type-1 domain maps to 2–188 (KIYIIDNGGQ…FKNFIEKCRR (187 aa)). Catalysis depends on Cys-79, which acts as the Nucleophile. Active-site residues include His-166 and Glu-168.

In terms of assembly, heterodimer composed of a glutamine amidotransferase subunit (A) and a GMP-binding subunit (B).

It catalyses the reaction XMP + L-glutamine + ATP + H2O = GMP + L-glutamate + AMP + diphosphate + 2 H(+). It participates in purine metabolism; GMP biosynthesis; GMP from XMP (L-Gln route): step 1/1. Functionally, catalyzes the synthesis of GMP from XMP. The polypeptide is GMP synthase [glutamine-hydrolyzing] subunit A (Picrophilus torridus (strain ATCC 700027 / DSM 9790 / JCM 10055 / NBRC 100828 / KAW 2/3)).